The sequence spans 121 residues: Large ribosomal subunit protein bL12 (121 aa).

This sequence belongs to the bacterial ribosomal protein bL12 family. Homodimer. Part of the ribosomal stalk of the 50S ribosomal subunit. Forms a multimeric L10(L12)X complex, where L10 forms an elongated spine to which 2 to 4 L12 dimers bind in a sequential fashion. Binds GTP-bound translation factors.

In terms of biological role, forms part of the ribosomal stalk which helps the ribosome interact with GTP-bound translation factors. Is thus essential for accurate translation. In Enterobacter sp. (strain 638), this protein is Large ribosomal subunit protein bL12.